We begin with the raw amino-acid sequence, 400 residues long: Probable protein phosphatase 2C 64 (400 aa).

The region spanning 47 to 355 (DFSMAVVQAN…DDITVIVVFF (309 aa)) is the PPM-type phosphatase domain. A Phosphoserine modification is found at Ser-75. Residues Asp-86, Gly-87, Asp-287, and Asp-346 each contribute to the Mn(2+) site.

The protein belongs to the PP2C family. As to quaternary structure, interacts with SAUR19. Mg(2+) is required as a cofactor. It depends on Mn(2+) as a cofactor.

It catalyses the reaction O-phospho-L-seryl-[protein] + H2O = L-seryl-[protein] + phosphate. The enzyme catalyses O-phospho-L-threonyl-[protein] + H2O = L-threonyl-[protein] + phosphate. Dephosphorylates and represses plasma membrane H(+)-ATPases (PM H(+)-ATPases, e.g. AHA1 and AHA2), thus influencing negatively plant growth and fitness. The chain is Probable protein phosphatase 2C 64 from Arabidopsis thaliana (Mouse-ear cress).